Consider the following 916-residue polypeptide: Protein translocase subunit SecA (916 aa).

ATP-binding positions include glutamine 87, 105–109, and aspartate 512; that span reads GEGKT. Positions 857–916 are disordered; the sequence is QHAEAPSMEQAVAGEDEELPEGPAPVVPLEPVRNEQKIGRNEPCPCGSGKKYKHCHGQLD. Zn(2+) is bound by residues cysteine 900, cysteine 902, cysteine 911, and histidine 912. A compositionally biased stretch (basic residues) spans 906 to 916; that stretch reads KKYKHCHGQLD.

The protein belongs to the SecA family. As to quaternary structure, monomer and homodimer. Part of the essential Sec protein translocation apparatus which comprises SecA, SecYEG and auxiliary proteins SecDF-YajC and YidC. Requires Zn(2+) as cofactor.

The protein resides in the cell inner membrane. It is found in the cytoplasm. It carries out the reaction ATP + H2O + cellular proteinSide 1 = ADP + phosphate + cellular proteinSide 2.. Part of the Sec protein translocase complex. Interacts with the SecYEG preprotein conducting channel. Has a central role in coupling the hydrolysis of ATP to the transfer of proteins into and across the cell membrane, serving both as a receptor for the preprotein-SecB complex and as an ATP-driven molecular motor driving the stepwise translocation of polypeptide chains across the membrane. This is Protein translocase subunit SecA from Pseudomonas paraeruginosa (strain DSM 24068 / PA7) (Pseudomonas aeruginosa (strain PA7)).